Reading from the N-terminus, the 257-residue chain is Imidazole glycerol phosphate synthase subunit HisF (257 aa).

Catalysis depends on residues Asp-11 and Asp-130.

Belongs to the HisA/HisF family. In terms of assembly, heterodimer of HisH and HisF.

It is found in the cytoplasm. It carries out the reaction 5-[(5-phospho-1-deoxy-D-ribulos-1-ylimino)methylamino]-1-(5-phospho-beta-D-ribosyl)imidazole-4-carboxamide + L-glutamine = D-erythro-1-(imidazol-4-yl)glycerol 3-phosphate + 5-amino-1-(5-phospho-beta-D-ribosyl)imidazole-4-carboxamide + L-glutamate + H(+). It functions in the pathway amino-acid biosynthesis; L-histidine biosynthesis; L-histidine from 5-phospho-alpha-D-ribose 1-diphosphate: step 5/9. Functionally, IGPS catalyzes the conversion of PRFAR and glutamine to IGP, AICAR and glutamate. The HisF subunit catalyzes the cyclization activity that produces IGP and AICAR from PRFAR using the ammonia provided by the HisH subunit. This chain is Imidazole glycerol phosphate synthase subunit HisF, found in Proteus mirabilis (strain HI4320).